The chain runs to 326 residues: Probable cell division protein WhiA (326 aa).

The H-T-H motif DNA-binding region spans 275–308 (SLDELGRLADPVMTKDAIAGRIRRLLAMADKRAL).

Belongs to the WhiA family.

Functionally, involved in cell division and chromosome segregation. The polypeptide is Probable cell division protein WhiA (Pseudarthrobacter chlorophenolicus (strain ATCC 700700 / DSM 12829 / CIP 107037 / JCM 12360 / KCTC 9906 / NCIMB 13794 / A6) (Arthrobacter chlorophenolicus)).